A 510-amino-acid polypeptide reads, in one-letter code: Histidine ammonia-lyase (510 aa).

Residues 143–145 (ASG) constitute a cross-link (5-imidazolinone (Ala-Gly)). Residue Ser144 is modified to 2,3-didehydroalanine (Ser).

It belongs to the PAL/histidase family. Post-translationally, contains an active site 4-methylidene-imidazol-5-one (MIO), which is formed autocatalytically by cyclization and dehydration of residues Ala-Ser-Gly.

The protein localises to the cytoplasm. The enzyme catalyses L-histidine = trans-urocanate + NH4(+). Its pathway is amino-acid degradation; L-histidine degradation into L-glutamate; N-formimidoyl-L-glutamate from L-histidine: step 1/3. The chain is Histidine ammonia-lyase from Psychromonas ingrahamii (strain DSM 17664 / CCUG 51855 / 37).